The primary structure comprises 424 residues: ATP-sensitive inward rectifier potassium channel 8 (424 aa).

Residues 1-69 (MLARKSIIPE…IFTTLVDLKW (69 aa)) are Cytoplasmic-facing. A Phosphoserine modification is found at Ser6. The chain crosses the membrane as a helical span at residues 70-94 (RHTLVIFTMSFLCSWLLFAIMWWLV). The Extracellular portion of the chain corresponds to 95-126 (AFAHGDIYAYMEKGTMEKSGLESAVCVTNVRS). Residues 127 to 138 (FTSAFLFSIEVQ) constitute an intramembrane region (helical; Pore-forming). The pore-forming intramembrane region spans 139–145 (VTIGFGG). A Selectivity filter motif is present at residues 140–145 (TIGFGG). Residues 146–154 (RMMTEECPL) lie on the Extracellular side of the membrane. Residues 155–176 (AITVLILQNIVGLIINAVMLGC) traverse the membrane as a helical segment. Residues 177-424 (IFMKTAQAHR…PEGNQCPSES (248 aa)) lie on the Cytoplasmic side of the membrane. Positions 373–409 (ELSHQNSLRKRNSMRRNNSMRRNNSIRRNNSSLMVPK) are disordered. A compositionally biased stretch (low complexity) spans 387–404 (RRNNSMRRNNSIRRNNSS).

It belongs to the inward rectifier-type potassium channel (TC 1.A.2.1) family. KCNJ8 subfamily. As to quaternary structure, interacts with ABCC9.

Its subcellular location is the membrane. It carries out the reaction K(+)(in) = K(+)(out). Inward rectifier potassium channels are characterized by a greater tendency to allow potassium to flow into the cell rather than out of it. Their voltage dependence is regulated by the concentration of extracellular potassium; as external potassium is raised, the voltage range of the channel opening shifts to more positive voltages. The inward rectification is mainly due to the blockage of outward current by internal magnesium. This channel is activated by internal ATP and can be blocked by external barium. Can form a sulfonylurea-sensitive but ATP-insensitive potassium channel with ABCC9. The chain is ATP-sensitive inward rectifier potassium channel 8 (Kcnj8) from Mus musculus (Mouse).